A 685-amino-acid chain; its full sequence is E3 ubiquitin-protein ligase RNF6 (685 aa).

Composition is skewed to basic and acidic residues over residues 1 to 10, 17 to 29, and 88 to 107; these read MNQSRSRSDG, PQDH…ERRW, and DLRD…SSHE. Disordered stretches follow at residues 1-29, 81-107, 121-142, 168-273, 286-345, and 499-576; these read MNQS…ERRW, EQLA…SSHE, GNAT…RTNP, DYTD…REGQ, RSNV…RRRG, and EADS…NPNN. Polar residues-rich tracts occupy residues 199–213, 250–264, and 286–297; these read SQTS…SNIP, ASRT…QSGG, and RSNVTVRNTNQR. The span at 303–313 shows a compositional bias: low complexity; that stretch reads LRSTSNSRSRS. Polar residues-rich tracts occupy residues 314 to 325 and 519 to 528; these read PIQRQSGTVYHN and ELSNLGTDNN. The RING-type zinc finger occupies 632-673; sequence CSVCISDYVTGNKLRQLPCMHEFHIHCIDRWLSENCTCPICR.

Belongs to the RNF12 family. As to expression, weakly expressed in peripheral blood, spleen, prostate, testis and ovary. According to a report, it is preferentially expressed in testis and ovary and hardly detected in other tissues.

It is found in the nucleus. It localises to the cytoplasm. The protein localises to the cell projection. Its subcellular location is the axon. The protein resides in the PML body. It catalyses the reaction S-ubiquitinyl-[E2 ubiquitin-conjugating enzyme]-L-cysteine + [acceptor protein]-L-lysine = [E2 ubiquitin-conjugating enzyme]-L-cysteine + N(6)-ubiquitinyl-[acceptor protein]-L-lysine.. It functions in the pathway protein modification; protein ubiquitination. E3 ubiquitin-protein ligase mediating 'Lys-48'-linked polyubiquitination of LIMK1 and its subsequent targeting to the proteasome for degradation. Negatively regulates axonal outgrowth through regulation of the LIMK1 turnover. Mediates 'Lys-6' and 'Lys-27'-linked polyubiquitination of AR/androgen receptor thereby modulating its transcriptional activity. May also bind DNA and function as a transcriptional regulator. Mediates polyubiquitination of QKI in macrophages, leading to its degradation. The polypeptide is E3 ubiquitin-protein ligase RNF6 (Homo sapiens (Human)).